A 349-amino-acid chain; its full sequence is Inhibitor of nuclear factor kappa-B kinase-interacting protein (349 aa).

The segment covering 1–11 (MSEVKSRKKSG) has biased composition (basic residues). The tract at residues 1-39 (MSEVKSRKKSGTKGAPAEPGKRNEGGKSPEARGGGGRGW) is disordered. A compositionally biased stretch (basic and acidic residues) spans 19–30 (PGKRNEGGKSPE). The helical transmembrane segment at 45-61 (GVSLLSLGTCLGLAWFV) threads the bilayer. The N-linked (GlcNAc...) asparagine glycan is linked to asparagine 145. Coiled coils occupy residues 183–216 (GLVT…IGDL) and 304–347 (IGRL…HISD). The N-linked (GlcNAc...) asparagine glycan is linked to asparagine 327.

Post-translationally, N-glycosylated.

It is found in the endoplasmic reticulum membrane. Target of p53/TP53 with pro-apoptotic function. This is Inhibitor of nuclear factor kappa-B kinase-interacting protein (IKBIP) from Bos taurus (Bovine).